We begin with the raw amino-acid sequence, 782 residues long: General transcription and DNA repair factor IIH helicase/translocase subunit XPB (782 aa).

Basic and acidic residues predominate over residues 1–11; that stretch reads MGKRDRADREK. A disordered region spans residues 1–51; it reads MGKRDRADREKKKSKKRHYEDEEDEEDDAPGNDTQEAVPSAAGKQVDESGT. The Nuclear localization signal motif lies at 6-18; the sequence is RADREKKKSKKRH. Positions 21 to 30 are enriched in acidic residues; it reads DEEDEEDDAP. A Helicase ATP-binding domain is found at 327–488; sequence MFGNGRARSG…DLNFLIGPKL (162 aa). 340–347 provides a ligand contact to ATP; that stretch reads LPCGAGKS. Positions 441–444 match the DEVH box motif; that stretch reads DEVH. In terms of domain architecture, Helicase C-terminal spans 542 to 702; sequence RACQFLIKFH…LAGMEEEDLA (161 aa). Ser-686 is modified (phosphoserine). Ser-751 carries the post-translational modification Phosphoserine; by CK2.

The protein belongs to the helicase family. RAD25/XPB subfamily. Component of the 7-subunit TFIIH core complex composed of XPB/ERCC3, XPD/ERCC2, GTF2H1, GTF2H2, GTF2H3, GTF2H4 and GTF2H5, which is active in NER. The core complex associates with the 3-subunit CDK-activating kinase (CAK) module composed of CCNH/cyclin H, CDK7 and MNAT1 to form the 10-subunit holoenzyme (holo-TFIIH) active in transcription. Interacts with PUF60. Interacts with ATF7IP. Interacts with KAT2A; leading to KAT2A recruitment to promoters and acetylation of histones. Part of TBP-based Pol II pre-initiation complex (PIC), in which Pol II core assembles with general transcription factors and other specific initiation factors including GTF2E1, GTF2E2, GTF2F1, GTF2F2, TCEA1, ERCC2, ERCC3, GTF2H2, GTF2H3, GTF2H4, GTF2H5, GTF2A1, GTF2A2, GTF2B and TBP; this large multi-subunit PIC complex mediates DNA unwinding and targets Pol II core to the transcription start site where the first phosphodiester bond forms. In terms of processing, phosphorylation on Ser-751 by CK2 controls the 5'-excision activity of ERCC1-XPF endonuclease; phosphorylated protein inhibits the excision activity and thus NER. Dephosphorylation reactivates the 5'-excision step. Phosphorylation has no effect on transcription or the 3'-5' helicase activity.

The protein resides in the nucleus. It carries out the reaction Couples ATP hydrolysis with the unwinding of duplex DNA by translocating in the 3'-5' direction.. The catalysed reaction is ATP + H2O = ADP + phosphate + H(+). Phosphorylation on Ser-751 by CK2 controls the 5'-excision activity of ERCC1-XPF endonuclease; phosphorylated protein inhibits the excision activity and thus NER. ATPase activity is stimulated by TFIIH subunit p52 (GTF2H4). DNA translocase activity by this subunit in TFIIH is stimulated by XPA, ERCC5/XPG and XFP plus ERCC1. In terms of biological role, ATP-dependent 3'-5' DNA helicase/translocase; binds dsDNA rather than ssDNA, unzipping it in a translocase rather than classical helicase activity. Component of the general transcription and DNA repair factor IIH (TFIIH) core complex. When complexed to CDK-activating kinase (CAK), involved in RNA transcription by RNA polymerase II. The ATPase activity of XPB/ERCC3, but not its helicase activity, is required for DNA opening; it may wrap around the damaged DNA wedging it open, causing localized melting and twisting that allows XPD/ERCC2 helicase to anchor. The ATP-dependent helicase activity of XPB/ERCC3 may be required for promoter escape. Also involved in transcription-coupled nucleotide excision repair (NER) of damaged DNA. In NER, TFIIH acts by opening DNA around the lesion to allow the excision of the damaged oligonucleotide and its replacement by a new DNA fragment. The structure of the TFIIH transcription complex differs from the NER-TFIIH complex; large movements by XPD/ERCC2 and XPB/ERCC3 are stabilized by XPA. This chain is General transcription and DNA repair factor IIH helicase/translocase subunit XPB (ERCC3), found in Bos taurus (Bovine).